The primary structure comprises 363 residues: Bonnadiene synthase (363 aa).

5 residues coordinate Mg(2+): D93, D98, N234, S238, and E242.

The protein belongs to the terpene synthase family. Mg(2+) serves as cofactor.

The catalysed reaction is (2E,6E,10E)-geranylgeranyl diphosphate = bonnadiene + diphosphate. It functions in the pathway secondary metabolite biosynthesis; terpenoid biosynthesis. Diterpene synthase that catalyzes the conversion of geranylgeranyl diphosphate (GGPP) to bonnadiene. Cannot use geranyl diphosphate (GPP), farnesyl diphosphate (FPP) and geranylfarnesyl diphosphate (GFPP). This is Bonnadiene synthase from Allokutzneria albata (Kibdelosporangium albatum).